Here is a 287-residue protein sequence, read N- to C-terminus: Mitochondrial dicarboxylate carrier (287 aa).

Solcar repeat units follow at residues 7–87, 100–187, and 196–279; these read SRWY…MRDY, NKVL…AKQL, and DNIF…LRKH. A run of 3 helical transmembrane segments spans residues 9-29, 62-81, and 102-122; these read WYFGGLASCGAACCTHPLDLL, GLSASLCRQMTYSLTRFAIY, and VLLGGISGLTGGFVGTPADLV. At K158 the chain carries N6-acetyllysine. 3 helical membrane passes run 162-181, 202-222, and 254-274; these read GATMASSRGALVTVGQLSCY, FVSSFIAGGCATFLCQPLDVL, and GLFPAGIRLIPHTVLTFMFLE.

This sequence belongs to the mitochondrial carrier (TC 2.A.29) family. As to expression, expressed at very high levels in white adipose tissue. And at low levels in brown adipose tissue, kidney and liver.

It localises to the mitochondrion inner membrane. The catalysed reaction is (S)-malate(in) + phosphate(out) = (S)-malate(out) + phosphate(in). It catalyses the reaction malonate(out) + (S)-malate(in) = malonate(in) + (S)-malate(out). It carries out the reaction (S)-malate(in) + succinate(out) = (S)-malate(out) + succinate(in). The enzyme catalyses (S)-malate(in) + sulfate(out) = (S)-malate(out) + sulfate(in). The catalysed reaction is malonate(out) + phosphate(in) = malonate(in) + phosphate(out). It catalyses the reaction succinate(out) + phosphate(in) = succinate(in) + phosphate(out). It carries out the reaction sulfate(out) + phosphate(in) = sulfate(in) + phosphate(out). The enzyme catalyses malonate(out) + succinate(in) = malonate(in) + succinate(out). Its activity is regulated as follows. Regulated by circadian protein CLOCK (Circadian Locomotor Output Cycles Kaput). Its function is as follows. Catalyzes the electroneutral exchange or flux of physiologically important metabolites such as dicarboxylates (malonate, malate, succinate), inorganic sulfur-containing anions, and phosphate, across mitochondrial inner membrane. Plays an important role in gluconeogenesis, fatty acid metabolism, urea synthesis, and sulfur metabolism, particularly in liver, by supplying the substrates for the different metabolic processes. Regulates fatty acid release from adipocytes, and contributes to systemic insulin sensitivity. This is Mitochondrial dicarboxylate carrier from Mus musculus (Mouse).